A 140-amino-acid polypeptide reads, in one-letter code: Large ribosomal subunit protein uL14 (140 aa).

Residue Ser17 is modified to Phosphoserine. Phosphotyrosine is present on Tyr38.

The protein belongs to the universal ribosomal protein uL14 family. Component of the large ribosomal subunit.

It localises to the cytoplasm. Its function is as follows. Component of the large ribosomal subunit. The ribosome is a large ribonucleoprotein complex responsible for the synthesis of proteins in the cell. This Pongo abelii (Sumatran orangutan) protein is Large ribosomal subunit protein uL14 (RPL23).